Here is a 609-residue protein sequence, read N- to C-terminus: MKWVVSILLIFLLNSTESRTMHSNAYGIASALDSFQCSPEMNLVDLATIFFAQFVQEATYKEVSKMVKDVLTVTEKSTGSEQPTGCSENRLSAFLEEICHEEEIPEKYGLSGCCSQNEEERHNCLLARKKDSPASIPPFQVPEPVTSCKAYEENREMFLNRYLYEIARRHPFLYSSTALYLASHYDKIISACCKSENAVECFQSKAATITKELRETSLLNQHVCAVIRNFGPRTLQAITVTTLSQRYSKANFTEIQKLVLDVAHAHEECCRGNVEECVQDGEKLISYVCSQEDILSSSIVECCKLPTVELAQCIIHAENDDKPEGLSPNLNRLLGERDFNQFSSKEKDLFMARFTYEYSRRHTKLAVPVILRVAKGYQEFLEKCSQSENPLECQDKGEEELQKYIQEGQALAKRSCGLFQKLGDYYLQNAFLVAYTKKAPQLTPPELIALTRKMATAAATCCQLSEDKQLACGEQVAGLIIGQLCIRHEESPINPGVGQCCTSSYANRRPCFSSLVVDETYVPPPFSDDKFIFHKDLCQAQGVALQTMKQQFLINLVKQKPQITEEQLEAVIADFSGLLEKCCQGQGQEVCFSEEGPQLISKTRAALGV.

Positions 1-18 are cleaved as a signal peptide; that stretch reads MKWVVSILLIFLLNSTES. Albumin domains follow at residues 19 to 210, 211 to 402, and 403 to 601; these read RTMH…ATIT, KELR…EELQ, and KYIQ…QLIS. H22 is a Cu(2+) binding site. 8 disulfide bridges follow: C99–C114, C113–C124, C148–C193, C192–C201, C224–C270, C269–C277, C289–C303, and C302–C313. S111 and S115 each carry phosphoserine. N-linked (GlcNAc...) asparagine glycosylation is present at N251. S344 bears the Phosphoserine mark. Cystine bridges form between C384/C393, C416/C462, C461/C472, C485/C501, C500/C511, C538/C583, and C582/C591.

Belongs to the ALB/AFP/VDB family. In terms of assembly, dimeric and trimeric forms have been found in addition to the monomeric form. Sulfated. Plasma.

The protein localises to the secreted. Binds copper, nickel, and fatty acids as well as, and bilirubin less well than, serum albumin. In Equus caballus (Horse), this protein is Alpha-fetoprotein (AFP).